Consider the following 160-residue polypeptide: Large ribosomal subunit protein eL21 (160 aa).

Basic and acidic residues-rich tracts occupy residues 112–123 (NDQKKKEAKEKG) and 136–145 (REAHFVRTNG). Residues 112–145 (NDQKKKEAKEKGTWVQLKRQPAPPREAHFVRTNG) form a disordered region.

Belongs to the eukaryotic ribosomal protein eL21 family. In terms of assembly, component of the large ribosomal subunit.

It localises to the cytoplasm. It is found in the cytosol. The protein resides in the endoplasmic reticulum. Component of the large ribosomal subunit. The ribosome is a large ribonucleoprotein complex responsible for the synthesis of proteins in the cell. This chain is Large ribosomal subunit protein eL21, found in Mus musculus (Mouse).